We begin with the raw amino-acid sequence, 192 residues long: Der GTPase-activating protein YihI (192 aa).

The span at 1 to 12 shows a compositional bias: basic residues; that stretch reads MSAKQPNRKPAG. Disordered regions lie at residues 1-87 and 145-192; these read MSAK…IKEK and DTDD…PKKK. A compositionally biased stretch (basic and acidic residues) spans 13-26; the sequence is KRKESDASAQEGRE. Residues 27–36 show a composition bias toward basic residues; that stretch reads RKRAAKRKGL. Residues 145-172 are compositionally biased toward acidic residues; sequence DTDDDEDEADFDEADFDEPGQPASEEEL. Over residues 183-192 the composition is skewed to basic and acidic residues; it reads PEPKPEPKKK.

This sequence belongs to the YihI family. As to quaternary structure, interacts with Der.

In terms of biological role, a GTPase-activating protein (GAP) that modifies Der/EngA GTPase function. May play a role in ribosome biogenesis. The sequence is that of Der GTPase-activating protein YihI from Aeromonas hydrophila subsp. hydrophila (strain ATCC 7966 / DSM 30187 / BCRC 13018 / CCUG 14551 / JCM 1027 / KCTC 2358 / NCIMB 9240 / NCTC 8049).